The following is a 265-amino-acid chain: Urease accessory protein UreH (265 aa).

This sequence belongs to the UreD family. UreH, UreF and UreG form a complex that acts as a GTP-hydrolysis-dependent molecular chaperone, activating the urease apoprotein by helping to assemble the nickel containing metallocenter of UreC. The UreE protein probably delivers the nickel.

Its subcellular location is the cytoplasm. Required for maturation of urease via the functional incorporation of the urease nickel metallocenter. The chain is Urease accessory protein UreH from Helicobacter pylori (strain G27).